The chain runs to 512 residues: Zinc metalloprotease mde10 (512 aa).

Residues 1–15 (MRLVLLFSCVLAVSS) form the signal peptide. The N-linked (GlcNAc...) asparagine glycan is linked to asparagine 35. Residues 65–306 (QTLWIGVVAD…KYVSLSCLSK (242 aa)) enclose the Peptidase M12B domain. Histidine 229 contacts Zn(2+). The active site involves glutamate 230. Residues histidine 233 and histidine 239 each coordinate Zn(2+). 2 disulfide bridges follow: cysteine 246-cysteine 254 and cysteine 374-cysteine 394. A Disintegrin domain is found at 315–402 (LGTCGNGIVE…KCPVDENWDD (88 aa)). N-linked (GlcNAc...) asparagine glycosylation is present at asparagine 432.

Zn(2+) serves as cofactor. Post-translationally, glycosylated.

It is found in the endoplasmic reticulum. Its subcellular location is the spore wall. Functionally, has a role in the development of the spore envelope. The polypeptide is Zinc metalloprotease mde10 (mde10) (Schizosaccharomyces pombe (strain 972 / ATCC 24843) (Fission yeast)).